Reading from the N-terminus, the 203-residue chain is dITP/XTP pyrophosphatase (203 aa).

Position 15–20 (15–20 (SGNAGK)) interacts with substrate. Mg(2+) contacts are provided by glutamate 45 and aspartate 74. Aspartate 74 serves as the catalytic Proton acceptor. Residues serine 75, 153–156 (FGYD), lysine 176, and 181–182 (HR) each bind substrate.

The protein belongs to the HAM1 NTPase family. As to quaternary structure, homodimer. Mg(2+) serves as cofactor.

It carries out the reaction XTP + H2O = XMP + diphosphate + H(+). The catalysed reaction is dITP + H2O = dIMP + diphosphate + H(+). The enzyme catalyses ITP + H2O = IMP + diphosphate + H(+). Pyrophosphatase that catalyzes the hydrolysis of nucleoside triphosphates to their monophosphate derivatives, with a high preference for the non-canonical purine nucleotides XTP (xanthosine triphosphate), dITP (deoxyinosine triphosphate) and ITP. Seems to function as a house-cleaning enzyme that removes non-canonical purine nucleotides from the nucleotide pool, thus preventing their incorporation into DNA/RNA and avoiding chromosomal lesions. In Prochlorococcus marinus (strain MIT 9313), this protein is dITP/XTP pyrophosphatase.